The primary structure comprises 432 residues: Luc7-like protein 3 (432 aa).

N-acetylmethionine is present on Met-1. Residues Ser-3, Ser-110, and Ser-115 each carry the phosphoserine modification. Residues 124–181 (KNEEKIQVLTDKIDVLLQQIEELGSEGKVEEAQGMMKLVEQLKEERELLRSTTSTIES) are a coiled coil. An N6-acetyllysine modification is found at Lys-231. Basic and acidic residues predominate over residues 234-287 (LRKRTEEPDRDERLKKEKQEREEREKEREREREERERKRRREEEEREKERARDR). The segment at 234 to 432 (LRKRTEEPDR…IKSEGDTQSN (199 aa)) is disordered. Residues 288–301 (ERRKRSRSRSRHSS) show a composition bias toward basic residues. Residues 302 to 311 (RTSDRRCSRS) show a composition bias toward basic and acidic residues. A compositionally biased stretch (basic residues) spans 312–367 (RDHKRSRSRERRRSRSRDRRRSRSHDRSERKHRSRSRDRRRSKSRDRKSYKHRSKS). Residues 368-414 (RDREQDRKSKEKEKRGSDDKKSSVKSGSREKQSEDTNTESKESDTKN) are compositionally biased toward basic and acidic residues. Ser-420 is subject to Phosphoserine. Over residues 421–432 (EDIKSEGDTQSN) the composition is skewed to basic and acidic residues. Residue Lys-424 forms a Glycyl lysine isopeptide (Lys-Gly) (interchain with G-Cter in SUMO1); alternate linkage. A Glycyl lysine isopeptide (Lys-Gly) (interchain with G-Cter in SUMO2); alternate cross-link involves residue Lys-424. Ser-425 and Ser-431 each carry phosphoserine.

It belongs to the Luc7 family. As to quaternary structure, may interact with SFRS1 and form homodimers. Interacts with JMJD6. Interacts with RBM25. Interacts with RSRC1 (via Arg/Ser-rich domain). Interacts with RRP1B. In terms of processing, phosphorylated in vitro by SRPK1, SRPK2 and CLK1. In terms of tissue distribution, widely expressed. Highest levels in heart, brain, pancreas, thymus, ovary, small intestine and peripheral blood leukocytes, as well as cerebellum, putamen and pituitary gland. Lowest levels in lung, liver and kidney. Also expressed in fetal tissues, including brain, heart, kidney, thymus and lung.

The protein localises to the nucleus speckle. Its function is as follows. Binds cAMP regulatory element DNA sequence. May play a role in RNA splicing. The sequence is that of Luc7-like protein 3 (LUC7L3) from Homo sapiens (Human).